The chain runs to 104 residues: Large ribosomal subunit protein uL24 (104 aa).

Belongs to the universal ribosomal protein uL24 family. As to quaternary structure, part of the 50S ribosomal subunit.

One of two assembly initiator proteins, it binds directly to the 5'-end of the 23S rRNA, where it nucleates assembly of the 50S subunit. In terms of biological role, one of the proteins that surrounds the polypeptide exit tunnel on the outside of the subunit. The chain is Large ribosomal subunit protein uL24 from Corynebacterium jeikeium (strain K411).